The following is a 282-amino-acid chain: Undecaprenyl-diphosphatase (282 aa).

7 helical membrane-spanning segments follow: residues 40 to 60 (GAAFSAIVQIGTLAAVLIYFY), 87 to 107 (MGWMIAAGTMPIVILGLLFKT), 116 to 136 (LYWISVALIVLALMLTLAEWL), 153 to 173 (IGWKEALLIGLAQSIALIPGS), 196 to 216 (FSFLLSLPAVFAAGIYQLYET), 229 to 249 (NLAVATLFAGIVGYASIAFLI), and 256 to 276 (STALFILYRIALGVGILGLIA).

It belongs to the UppP family.

It localises to the cell inner membrane. It catalyses the reaction di-trans,octa-cis-undecaprenyl diphosphate + H2O = di-trans,octa-cis-undecaprenyl phosphate + phosphate + H(+). In terms of biological role, catalyzes the dephosphorylation of undecaprenyl diphosphate (UPP). Confers resistance to bacitracin. This chain is Undecaprenyl-diphosphatase, found in Chlorobium phaeobacteroides (strain BS1).